A 443-amino-acid polypeptide reads, in one-letter code: ATP-dependent protease ATPase subunit HslU (443 aa).

ATP is bound by residues Ile19, Gly61 to Glu66, Asp256, Glu321, and Arg393.

It belongs to the ClpX chaperone family. HslU subfamily. In terms of assembly, a double ring-shaped homohexamer of HslV is capped on each side by a ring-shaped HslU homohexamer. The assembly of the HslU/HslV complex is dependent on binding of ATP.

It is found in the cytoplasm. ATPase subunit of a proteasome-like degradation complex; this subunit has chaperone activity. The binding of ATP and its subsequent hydrolysis by HslU are essential for unfolding of protein substrates subsequently hydrolyzed by HslV. HslU recognizes the N-terminal part of its protein substrates and unfolds these before they are guided to HslV for hydrolysis. The protein is ATP-dependent protease ATPase subunit HslU of Cupriavidus pinatubonensis (strain JMP 134 / LMG 1197) (Cupriavidus necator (strain JMP 134)).